A 234-amino-acid polypeptide reads, in one-letter code: Sugar fermentation stimulation protein homolog (234 aa).

Belongs to the SfsA family.

The polypeptide is Sugar fermentation stimulation protein homolog (Shewanella frigidimarina (strain NCIMB 400)).